The following is a 318-amino-acid chain: Transaldolase (318 aa).

Residue K132 is the Schiff-base intermediate with substrate of the active site.

It belongs to the transaldolase family. Type 1 subfamily. In terms of assembly, homodimer.

The protein resides in the cytoplasm. The catalysed reaction is D-sedoheptulose 7-phosphate + D-glyceraldehyde 3-phosphate = D-erythrose 4-phosphate + beta-D-fructose 6-phosphate. The protein operates within carbohydrate degradation; pentose phosphate pathway; D-glyceraldehyde 3-phosphate and beta-D-fructose 6-phosphate from D-ribose 5-phosphate and D-xylulose 5-phosphate (non-oxidative stage): step 2/3. In terms of biological role, transaldolase is important for the balance of metabolites in the pentose-phosphate pathway. The protein is Transaldolase of Shewanella sp. (strain ANA-3).